We begin with the raw amino-acid sequence, 231 residues long: Aquaporin Z (231 aa).

Transmembrane regions (helical) follow at residues 9 to 29 and 34 to 54; these read CFGT…AAGF and IGFA…AFAV. Residues 63–65 carry the NPA 1 motif; that stretch reads NPA. Helical transmembrane passes span 82–102, 129–149, and 156–176; these read VGYV…LYLI, YSML…LLVI, and FAPA…IHLI. The NPA 2 signature appears at 186-188; it reads NPA. Residues 202–222 form a helical membrane-spanning segment; the sequence is LEQLWFFWVVPIVGGIIGGLI.

This sequence belongs to the MIP/aquaporin (TC 1.A.8) family. Homotetramer.

It localises to the cell inner membrane. The catalysed reaction is H2O(in) = H2O(out). Functionally, channel that permits osmotically driven movement of water in both directions. It is involved in the osmoregulation and in the maintenance of cell turgor during volume expansion in rapidly growing cells. It mediates rapid entry or exit of water in response to abrupt changes in osmolarity. The chain is Aquaporin Z from Escherichia coli O157:H7.